Reading from the N-terminus, the 258-residue chain is Coiled-coil domain-containing protein 107 (258 aa).

The signal sequence occupies residues 1–24 (MASVVSLAGTLGLLLVSALPEVLG). Positions 25-35 (DRRSPDRRAHP) are enriched in basic and acidic residues. The interval 25–63 (DRRSPDRRAHPGDAGQVGPAAAEPRRQSPPSKNQRERAR) is disordered. A helical transmembrane segment spans residues 66 to 86 (ALPLGALYTAAAVAFVLYKCL). A coiled-coil region spans residues 106–134 (LQSEQHLAQLTQQLVQTEQHLNSLMAQLD). The disordered stretch occupies residues 203 to 222 (EPLNWNTGTRNLTPPREMQP).

It localises to the membrane. In Bos taurus (Bovine), this protein is Coiled-coil domain-containing protein 107 (CCDC107).